The chain runs to 320 residues: NAC domain-containing protein 18 (320 aa).

Residues 1–22 (MESTDSSGGPPPPQPNLPPGFR) form a disordered region. The span at 9–18 (GPPPPQPNLP) shows a compositional bias: pro residues. Positions 17–177 (LPPGFRFHPT…DWVLCRIYKK (161 aa)) constitute an NAC domain. A DNA-binding region spans residues 118–183 (VGVKKALVFY…IYKKNNSTAS (66 aa)).

Restricted primarily to the region of the embryo including the SAM. Expressed in the outer integument, but seems not expressed in the embryo at the torpedo stage.

The protein resides in the nucleus. Functionally, may encode a transcription factor involved in the elaboration of shoot apical meristems (SAM). Together with NAC056/NARS1, regulates embryogenesis by regulating the development and degeneration of ovule integuments, a process required for intertissue communication between the embryo and the maternal integument. This is NAC domain-containing protein 18 (NAC018) from Arabidopsis thaliana (Mouse-ear cress).